A 226-amino-acid chain; its full sequence is Ribonuclease 3 (226 aa).

One can recognise an RNase III domain in the interval 5–127 (LERLQRALGY…IIGAIYLDAG (123 aa)). Glu40 contacts Mg(2+). The active site involves Asp44. Mg(2+) contacts are provided by Asp113 and Glu116. Glu116 is an active-site residue. In terms of domain architecture, DRBM spans 154–224 (DSKTRLQEYL…AKQALLALGV (71 aa)).

This sequence belongs to the ribonuclease III family. Homodimer. Mg(2+) serves as cofactor.

It is found in the cytoplasm. It carries out the reaction Endonucleolytic cleavage to 5'-phosphomonoester.. Digests double-stranded RNA. Involved in the processing of primary rRNA transcript to yield the immediate precursors to the large and small rRNAs (23S and 16S). Processes some mRNAs, and tRNAs when they are encoded in the rRNA operon. Processes pre-crRNA and tracrRNA of type II CRISPR loci if present in the organism. The protein is Ribonuclease 3 of Hahella chejuensis (strain KCTC 2396).